A 755-amino-acid chain; its full sequence is Protein phosphatase 1E (755 aa).

A disordered region spans residues 21-131 (EFRGPCGGGE…PPLPPLPRPL (111 aa)). Repeat copies occupy residues 31–32 (PE), 33–34 (PE), 35–36 (PE), 37–38 (PE), 39–40 (PE), 41–42 (PE), and 43–44 (PE). An 11 X 2 AA tandem repeats of P-E region spans residues 31–52 (PEPEPEPEPEPEPESEPEPEPE). Composition is skewed to acidic residues over residues 31–68 (PEPE…EPGE) and 77–101 (EEGD…EEEG). One copy of the 8; approximate repeat lies at 45 to 46 (SE). A run of 3 repeats spans residues 47-48 (PE), 49-50 (PE), and 51-52 (PE). Residues 102-113 (AATAAAAPGHSA) are compositionally biased toward low complexity. The segment covering 114–129 (VPPPPPQLPPLPPLPR) has biased composition (pro residues). In terms of domain architecture, PPM-type phosphatase spans 231-488 (ETSIHAIKNM…DNITVIVVFL (258 aa)). Residues Asp273, Gly274, Asp435, and Asp479 each coordinate Mn(2+). The disordered stretch occupies residues 498–537 (SEESDWTENSFQGGQEDGGDDKENHGECKRPWPQHQCSAP). Over residues 518–527 (DKENHGECKR) the composition is skewed to basic and acidic residues. Phosphoserine is present on residues Ser535 and Ser548.

This sequence belongs to the PP2C family. Heterotrimer. Interacts with PAX1 and ARHGEF6 (or ARHGEF7). Mg(2+) is required as a cofactor. Requires Mn(2+) as cofactor.

The protein resides in the nucleus. The protein localises to the cytoplasm. The enzyme catalyses O-phospho-L-seryl-[protein] + H2O = L-seryl-[protein] + phosphate. It catalyses the reaction O-phospho-L-threonyl-[protein] + H2O = L-threonyl-[protein] + phosphate. Functionally, protein phosphatase that inactivates multifunctional CaM kinases such as CAMK4 and CAMK2. Dephosphorylates and inactivates PAK. May play a role in the inhibition of actin fiber stress breakdown and in morphological changes driven by TNK2/CDC42. Dephosphorylates PRKAA2. This is Protein phosphatase 1E (PPM1E) from Homo sapiens (Human).